The sequence spans 184 residues: Mediator of RNA polymerase II transcription subunit 30 (184 aa).

The stretch at 136-179 forms a coiled coil; sequence SQLRFASEEKREILEVNKKLKQKNQQLKQIMDQLRNLIWDINSM.

The protein belongs to the Mediator complex subunit 30 family. As to quaternary structure, component of the Mediator complex.

The protein localises to the nucleus. In terms of biological role, component of the Mediator complex, a coactivator involved in the regulated transcription of nearly all RNA polymerase II-dependent genes. Mediator functions as a bridge to convey information from gene-specific regulatory proteins to the basal RNA polymerase II transcription machinery. Mediator is recruited to promoters by direct interactions with regulatory proteins and serves as a scaffold for the assembly of a functional preinitiation complex with RNA polymerase II and the general transcription factors. The sequence is that of Mediator of RNA polymerase II transcription subunit 30 (med30) from Xenopus laevis (African clawed frog).